Here is a 209-residue protein sequence, read N- to C-terminus: Urease accessory protein UreG (209 aa).

Residue 10–17 coordinates GTP; it reads GPVGSGKT.

Belongs to the SIMIBI class G3E GTPase family. UreG subfamily. Homodimer. UreD, UreF and UreG form a complex that acts as a GTP-hydrolysis-dependent molecular chaperone, activating the urease apoprotein by helping to assemble the nickel containing metallocenter of UreC. The UreE protein probably delivers the nickel.

It is found in the cytoplasm. Its function is as follows. Facilitates the functional incorporation of the urease nickel metallocenter. This process requires GTP hydrolysis, probably effectuated by UreG. The chain is Urease accessory protein UreG from Lysinibacillus sphaericus (strain C3-41).